The following is a 320-amino-acid chain: Delta(7)-sterol 5(6)-desaturase erg3C (320 aa).

3 helical membrane-spanning segments follow: residues 43 to 63 (VISILVLTQLGATSLYLFFSA), 91 to 111 (SSLSAIPFINILTLPWFLAEV), and 127 to 147 (PWLVVSSILYMAFNDIGIYWI). The Fatty acid hydroxylase domain occupies 134–283 (ILYMAFNDIG…FTWADAYFGS (150 aa)). The Histidine box-1 signature appears at 148-152 (HRLEH). Positions 161–165 (HKPHH) match the Histidine box-2 motif. The chain crosses the membrane as a helical span at residues 224-244 (YMVLFAAVQIWTILIHDGDMI). The short motif at 259-263 (HTLHH) is the Histidine box-3 element.

It belongs to the sterol desaturase family. Fe cation is required as a cofactor.

It localises to the endoplasmic reticulum membrane. Its function is as follows. Delta(7)-sterol 5(6)-desaturase; part of the third module of ergosterol biosynthesis pathway that includes the late steps of the pathway. Erg3C is a minor delta(7)-sterol 5(6)-desaturase within the ergosterol pathway, erg3B being the major one. The third module or late pathway involves the ergosterol synthesis itself through consecutive reactions that mainly occur in the endoplasmic reticulum (ER) membrane. Firstly, the squalene synthase erg9 catalyzes the condensation of 2 farnesyl pyrophosphate moieties to form squalene, which is the precursor of all steroids. Squalene synthase is crucial for balancing the incorporation of farnesyl diphosphate (FPP) into sterol and nonsterol isoprene synthesis. Secondly, squalene is converted into lanosterol by the consecutive action of the squalene epoxidase erg1 and the lanosterol synthase erg7. Then, the delta(24)-sterol C-methyltransferase erg6 methylates lanosterol at C-24 to produce eburicol. Eburicol is the substrate of the sterol 14-alpha demethylase encoded by cyp51A and cyp51B, to yield 4,4,24-trimethyl ergosta-8,14,24(28)-trienol. The C-14 reductase erg24 then reduces the C14=C15 double bond which leads to 4,4-dimethylfecosterol. A sequence of further demethylations at C-4, involving the C-4 demethylation complex containing the C-4 methylsterol oxidases erg25A or erg25B, the sterol-4-alpha-carboxylate 3-dehydrogenase erg26 and the 3-keto-steroid reductase erg27, leads to the production of fecosterol via 4-methylfecosterol. The C-8 sterol isomerase erg2 then catalyzes the reaction which results in unsaturation at C-7 in the B ring of sterols and thus converts fecosterol to episterol. The sterol-C5-desaturase erg3B then catalyzes the introduction of a C-5 double bond in the B ring to produce 5-dehydroepisterol. The 2 other sterol-C5-desaturases, erg3A and erg3C, seem to be less important in ergosterol biosynthesis. The C-22 sterol desaturase erg5 further converts 5-dehydroepisterol into ergosta-5,7,22,24(28)-tetraen-3beta-ol by forming the C-22(23) double bond in the sterol side chain. Finally, ergosta-5,7,22,24(28)-tetraen-3beta-ol is substrate of the C-24(28) sterol reductases erg4A and erg4B to produce ergosterol. Possible alternative sterol biosynthetic pathways might exist from fecosterol to ergosterol, depending on the activities of the erg3 isoforms. The polypeptide is Delta(7)-sterol 5(6)-desaturase erg3C (Aspergillus fumigatus (strain ATCC MYA-4609 / CBS 101355 / FGSC A1100 / Af293) (Neosartorya fumigata)).